Here is a 174-residue protein sequence, read N- to C-terminus: Protein GrpE (174 aa).

The disordered stretch occupies residues 1–35 (MAQDIKNEEVEEVQEEEVVKTAEETTPEKSELDLA). Residues 17 to 35 (EVVKTAEETTPEKSELDLA) are compositionally biased toward basic and acidic residues.

It belongs to the GrpE family. Homodimer.

The protein resides in the cytoplasm. In terms of biological role, participates actively in the response to hyperosmotic and heat shock by preventing the aggregation of stress-denatured proteins, in association with DnaK and GrpE. It is the nucleotide exchange factor for DnaK and may function as a thermosensor. Unfolded proteins bind initially to DnaJ; upon interaction with the DnaJ-bound protein, DnaK hydrolyzes its bound ATP, resulting in the formation of a stable complex. GrpE releases ADP from DnaK; ATP binding to DnaK triggers the release of the substrate protein, thus completing the reaction cycle. Several rounds of ATP-dependent interactions between DnaJ, DnaK and GrpE are required for fully efficient folding. In Streptococcus pneumoniae serotype 4 (strain ATCC BAA-334 / TIGR4), this protein is Protein GrpE.